Consider the following 404-residue polypeptide: MDTLVEDDICILNHEKAHKREAVTPLSAYPGDESVASHFALVTAYEDIKKRLKDSEKENSFLKKRIRALEEKLVGARVEEETSSVGREQVNKAYHAYREVCIDRDNLKSRLEKISKDNSESLRALTEQLQCKEVELLQLRTEVETQQVMRNLNPPSSNWEVEKLSCDLKIHGLEQELELLRKECSDLRTELQKARQTGPSQEDILQDRDVIRPSLPREEHVPHQGPHHSDHMQHAYWELRREMANLHLVTRVQAELLRQLKTAAAGKACTQVGCVEDLGRDSAKLHLANCTAAYKRHPPLSPHGKATCYAPPSTLPGDRKAFSDKAVLQSWTDNERLTPNDGADFQEHNSYGRNSLEDNSWVFPSPPKSSETAFGESKSKILPSPNLPPLHYLDQHNQNCLYKS.

The tract at residues 1–198 (MDTLVEDDIC…TELQKARQTG (198 aa)) is homodimerization. The stretch at 40–198 (ALVTAYEDIK…TELQKARQTG (159 aa)) forms a coiled coil. An interaction with TBK1 and IKBKE region spans residues 229-269 (SDHMQHAYWELRREMANLHLVTRVQAELLRQLKTAAAGKAC). A Phosphoserine modification is found at serine 330. Disordered regions lie at residues 332-351 (TDNERLTPNDGADFQEHNSY) and 356-390 (LEDNSWVFPSPPKSSETAFGESKSKILPSPNLPPL). Serine 365 carries the post-translational modification Phosphoserine.

Homodimer. Interacts with IKBKE, TBK1 and TICAM1. Interacts with TAX1BP1. Interacts with CALCOCO2. Post-translationally, ubiquitinated via 'Lys-48'-linked polyubiquitination by TRIM38, leading to its degradation.

It localises to the cytoplasm. Adapter protein which binds TBK1 and IKBKE playing a role in antiviral innate immunity. Activates serine/threonine-protein kinase TBK1 and facilitates its oligomerization. Enhances the phosphorylation of NF-kappa-B p65 subunit RELA by TBK1. Promotes TBK1-induced as well as TNF-alpha or PMA-induced activation of NF-kappa-B. Participates in IFNB promoter activation via TICAM1. The chain is 5-azacytidine-induced protein 2 (Azi2) from Rattus norvegicus (Rat).